Consider the following 400-residue polypeptide: MVKVQSIQSQAVHAEERAHEADHPSSQVALFGADQPLRLDCGVDLAPFQIAYQTYGALNADKSNAILVCHALTGDQHVANIHPVTGKPGWWQTLVGPGKPLDPERFFIICSNVIGSCMGSTGPSSTNPLTGKPWGLDFPIITIPDMVRAQAMLIDRLGIDRLFCVVGGSMGGMQTLQWSVAYPKRVASALAIACSTRHSAQNIAFHELGRQAVMADPEWHHGRYYEEGSYPHRGLGVARMAAHITYLSDAALHRKFGRRMQDRELPTFSFDADFQVESYLRYQGSSFVERFDANSYLYLTRAMDYFDIAADHDGVLAEAFRDTTTRFCVVSFTSDWLFPTSESRNVVHALNAGGARVSFAEIETDRGHDAFLLDVPEFVDIVRAFLQSAGVAHGLAGKGH.

The segment covering methionine 1–alanine 11 has biased composition (polar residues). A disordered region spans residues methionine 1 to proline 24. Positions histidine 13 to histidine 23 are enriched in basic and acidic residues. One can recognise an AB hydrolase-1 domain in the interval asparagine 64–leucine 373. Catalysis depends on serine 169, which acts as the Nucleophile. A substrate-binding site is contributed by arginine 239. Active-site residues include aspartate 335 and histidine 368. Aspartate 369 is a binding site for substrate.

Belongs to the AB hydrolase superfamily. MetX family. Homodimer.

Its subcellular location is the cytoplasm. It catalyses the reaction L-homoserine + acetyl-CoA = O-acetyl-L-homoserine + CoA. It functions in the pathway amino-acid biosynthesis; L-methionine biosynthesis via de novo pathway; O-acetyl-L-homoserine from L-homoserine: step 1/1. In terms of biological role, transfers an acetyl group from acetyl-CoA to L-homoserine, forming acetyl-L-homoserine. The chain is Homoserine O-acetyltransferase from Rhodopseudomonas palustris (strain BisB18).